A 182-amino-acid chain; its full sequence is Large ribosomal subunit protein uL5c (182 aa).

It belongs to the universal ribosomal protein uL5 family. In terms of assembly, part of the 50S ribosomal subunit; contacts the 5S rRNA.

It localises to the plastid. The protein localises to the chloroplast. Binds 5S rRNA, forms part of the central protuberance of the 50S subunit. The polypeptide is Large ribosomal subunit protein uL5c (rpl5) (Cyanidium caldarium (Red alga)).